The sequence spans 481 residues: UDP-N-acetylmuramate--L-alanine ligase (481 aa).

Position 123-129 (123-129 (GTHGKTT)) interacts with ATP.

It belongs to the MurCDEF family.

The protein localises to the cytoplasm. The catalysed reaction is UDP-N-acetyl-alpha-D-muramate + L-alanine + ATP = UDP-N-acetyl-alpha-D-muramoyl-L-alanine + ADP + phosphate + H(+). Its pathway is cell wall biogenesis; peptidoglycan biosynthesis. Cell wall formation. The chain is UDP-N-acetylmuramate--L-alanine ligase from Pseudomonas fluorescens (strain SBW25).